The primary structure comprises 320 residues: Nucleotide-binding protein Psyc_0118 (320 aa).

Position 32–39 (G32–T39) interacts with ATP. Position 82-85 (D82–T85) interacts with GTP.

The protein belongs to the RapZ-like family.

Displays ATPase and GTPase activities. This chain is Nucleotide-binding protein Psyc_0118, found in Psychrobacter arcticus (strain DSM 17307 / VKM B-2377 / 273-4).